The primary structure comprises 412 residues: Branched-chain alpha-ketoacid dehydrogenase kinase (412 aa).

Residues 1–30 constitute a mitochondrion transit peptide; that stretch reads MILASVLRSGPGGGLPLRPLLGPALALRAR. Serine 31 carries the phosphoserine modification. Phosphoserine; by autocatalysis is present on serine 52. The region spanning 159–404 is the Histidine kinase domain; sequence LDDHKDVVTL…DVYLRLRHID (246 aa). Lysine 192 and lysine 233 each carry N6-acetyllysine. Positions 279 and 315 each coordinate ATP. Residue asparagine 279 coordinates Mg(2+). K(+) contacts are provided by valine 328, aspartate 330, and phenylalanine 333. Residues threonine 334 and threonine 335 each coordinate ATP. Phosphoserine is present on residues serine 356 and serine 360. 3 residues coordinate ATP: histidine 364, glycine 367, and leucine 370. Glycine 367 contacts K(+).

The protein belongs to the PDK/BCKDK protein kinase family. Homodimer. Homotetramer. Dimerizes through interaction of two opposing nucleotide-binding domains. Interacts with E2 component of the branched-chain alpha-ketoacid dehydrogenase (BCKDH) complex. Competes with BCKDK for binding to the E2 component; this interaction is modulated by branched-chain alpha-keto acids. At steady state, BCKDH holoenzyme contains BCKDK and BCKDHA is phosphorylated. In response to high levels of branched-chain alpha-keto acids, the inhibitory BCKDK is replaced by activating PPM1K leading to BCKDHA dephosphorylation and BCAA degradation. Post-translationally, autophosphorylated. In terms of tissue distribution, ubiquitous.

The protein resides in the mitochondrion matrix. The catalysed reaction is L-seryl-[3-methyl-2-oxobutanoate dehydrogenase] + ATP = O-phospho-L-seryl-[3-methyl-2-oxobutanoate dehydrogenase] + ADP + H(+). It carries out the reaction L-seryl-[protein] + ATP = O-phospho-L-seryl-[protein] + ADP + H(+). It functions in the pathway protein modification. Allosterically inhibited by certain thiazoles and thiophenes: thiazoles increase interaction with DBT/BCKDH-E2, whereas thiophenes reduce this interaction. Inhibited by 3,6- dichlorobenzo[b]thiophene-2-carboxylic acid (BT2). The ATP binding is mediated by both potassium and magnesium ions. Functionally, serine/threonine-protein kinase component of macronutrients metabolism. Forms a functional kinase and phosphatase pair with PPM1K, serving as a metabolic regulatory node that coordinates branched-chain amino acids (BCAAs) with glucose and lipid metabolism via two distinct phosphoprotein targets: mitochondrial BCKDHA subunit of the branched-chain alpha-ketoacid dehydrogenase (BCKDH) complex and cytosolic ACLY, a lipogenic enzyme of Krebs cycle. Phosphorylates and inactivates mitochondrial BCKDH complex a multisubunit complex consisting of three multimeric components each involved in different steps of BCAA catabolism: E1 composed of BCKDHA and BCKDHB, E2 core composed of DBT monomers, and E3 composed of DLD monomers. Associates with the E2 component of BCKDH complex and phosphorylates BCKDHA on Ser-337, leading to conformational changes that interrupt substrate channeling between E1 and E2 and inactivates the BCKDH complex. Phosphorylates ACLY on Ser-455 in response to changes in cellular carbohydrate abundance such as occurs during fasting to feeding metabolic transition. Refeeding stimulates MLXIPL/ChREBP transcription factor, leading to increased BCKDK to PPM1K expression ratio, phosphorylation and activation of ACLY that ultimately results in the generation of malonyl-CoA and oxaloacetate immediate substrates of de novo lipogenesis and glucogenesis, respectively. Recognizes phosphosites having SxxE/D canonical motif. This Homo sapiens (Human) protein is Branched-chain alpha-ketoacid dehydrogenase kinase.